We begin with the raw amino-acid sequence, 589 residues long: Protein MICRORCHIDIA 3 (589 aa).

The tract at residues 1-33 is disordered; that stretch reads MAPESKNAGVSVVVNLDSDSDSDNDDGVGGRGA. Positions 542–589 form a coiled coil; it reads MRCEEYVKKETELEQTVSNLAKELEETKSKCARLALLVDAKRREMQQV.

This sequence belongs to the MORC ATPase protein family. As to quaternary structure, homodimer and heterodimer. Component of an RNA-directed DNA methylation (RdDM) complex. It depends on Mg(2+) as a cofactor. Mn(2+) is required as a cofactor.

It localises to the nucleus. Its function is as follows. Exhibits ATPase activity. Binds DNA/RNA in a non-specific manner and exhibits endonuclease activity. Probably involved in DNA repair. Involved in RNA-directed DNA methylation (RdDM) as a component of the RdDM machinery and required for gene silencing. May also be involved in the regulation of chromatin architecture to maintain gene silencing. The protein is Protein MICRORCHIDIA 3 of Arabidopsis thaliana (Mouse-ear cress).